The chain runs to 308 residues: Coenzyme PQQ synthesis protein B (308 aa).

Belongs to the PqqB family.

Its pathway is cofactor biosynthesis; pyrroloquinoline quinone biosynthesis. In terms of biological role, may be involved in the transport of PQQ or its precursor to the periplasm. The chain is Coenzyme PQQ synthesis protein B from Klebsiella pneumoniae subsp. pneumoniae (strain ATCC 700721 / MGH 78578).